A 200-amino-acid chain; its full sequence is Probable E3 ubiquitin-protein ligase ATL45 (200 aa).

Residues 26–46 form a helical membrane-spanning segment; it reads MVVILSALLCALVCVAGLAAV. An RING-type; atypical zinc finger spans residues 113–155; that stretch reads CAICITEFSEGEEIRILPLCSHAFHVACIDKWLTSRSSCPSCR.

Belongs to the RING-type zinc finger family. ATL subfamily. In terms of assembly, interacts with BIK1.

It localises to the membrane. The enzyme catalyses S-ubiquitinyl-[E2 ubiquitin-conjugating enzyme]-L-cysteine + [acceptor protein]-L-lysine = [E2 ubiquitin-conjugating enzyme]-L-cysteine + N(6)-ubiquitinyl-[acceptor protein]-L-lysine.. Its pathway is protein modification; protein ubiquitination. Its function is as follows. E3 ubiquitin-protein ligase that possess E3 ubiquitin ligase activity in vitro and mediates protein monoubiquitination. Triggers the monoubiquitination of phosphorylated BIK1 in response to pathogen-associated molecular pattern (PAMP) detection. May be involved in the early steps of the plant defense signaling pathway. In Arabidopsis thaliana (Mouse-ear cress), this protein is Probable E3 ubiquitin-protein ligase ATL45.